The following is a 429-amino-acid chain: MSSVVVVGTQWGDEGKGKITDFLSEHAEVVARYQGGNNAGHTIVFGGVKYKLHLIPSGIFYKEKICVIGNGLVVDPKALLEELKYLHDRGVSTDNLRVSNRAHVILPYHLKQDELEEASKGDNKIGTTKKGIGPAYMDKAARIGIRMADLLDREAFKEKLERNLAQKNRLFEKMYDTEGFSVEEIFEEYFEYGQQIAQYVCDTSVVLNDALDNNHRVLFEGAQGVMLDIDHGTYPFVTSSNPIAGGVTVGTGVGPAKVTRVVGVCKAYTSRVGDGPFPTELHDEIGHQIREVGREYGTTTGRPRRVGWFDSVVVRHARRVSGLTDLSLNSIDVLTGISTLKICVAYKYNGEVIDEVPANLNILAKCEPVYEELPGWTEDITGVRSLDELPENARKYVERVSELTGIQLSMFSVGPDRNQTNIVRNVYEA.

GTP is bound by residues 12 to 18 and 40 to 42; these read GDEGKGK and GHT. Asp13 acts as the Proton acceptor in catalysis. Residues Asp13 and Gly40 each coordinate Mg(2+). Residues 13–16, 38–41, Thr128, Arg142, Gln223, Thr238, and Arg302 each bind IMP; these read DEGK and NAGH. The Proton donor role is filled by His41. 298 to 304 is a binding site for substrate; sequence TTTGRPR. GTP is bound by residues Arg304, 330–332, and 412–414; these read SID and SVG.

Belongs to the adenylosuccinate synthetase family. In terms of assembly, homodimer. Mg(2+) is required as a cofactor.

The protein resides in the cytoplasm. It catalyses the reaction IMP + L-aspartate + GTP = N(6)-(1,2-dicarboxyethyl)-AMP + GDP + phosphate + 2 H(+). It functions in the pathway purine metabolism; AMP biosynthesis via de novo pathway; AMP from IMP: step 1/2. Its function is as follows. Plays an important role in the de novo pathway of purine nucleotide biosynthesis. Catalyzes the first committed step in the biosynthesis of AMP from IMP. This Bacillus cereus (strain ATCC 10987 / NRS 248) protein is Adenylosuccinate synthetase.